Here is a 376-residue protein sequence, read N- to C-terminus: Probable transcription factor At1g61730 (376 aa).

A disordered region spans residues 1-150 (MTKKLNPLED…RVKKDEESVK (150 aa)). Positions 17 to 40 (SDEDDVETSEAGEASDDSSSSEED) are enriched in acidic residues. Ser49 carries the post-translational modification Phosphoserine. The span at 49 to 72 (SPSATTAAAPPAKSTAVSTAADSD) shows a compositional bias: low complexity. The segment covering 73–83 (SGSETETDSDS) has biased composition (acidic residues). The span at 87–103 (NPPNSGSGKTIALNTVN) shows a compositional bias: polar residues.

This sequence belongs to the GeBP family. As to quaternary structure, interacts with DEK3.

This is Probable transcription factor At1g61730 from Arabidopsis thaliana (Mouse-ear cress).